Here is a 207-residue protein sequence, read N- to C-terminus: MARYIGPKAKLSRREGTDLFLKSARRSLADKCKLDSKPGQHGRTSGARTSDYGTQLREKQKVKRIYGVLERQFRRYFAEADRRKGNTGENLLQLLESRLDNVVYRMGFGSTRAEARQLVSHKSITVNGVVANVPSQQVKSGDVVAIREKAKKQARIVEALSLAEQGGMPSWVAVDAKKFEGTFKQMPERAEIAGDINESLIVELYSR.

Positions 31–55 are disordered; that stretch reads KCKLDSKPGQHGRTSGARTSDYGTQ. The span at 42–53 shows a compositional bias: polar residues; it reads GRTSGARTSDYG. The region spanning 97 to 160 is the S4 RNA-binding domain; it reads SRLDNVVYRM…KKQARIVEAL (64 aa).

It belongs to the universal ribosomal protein uS4 family. In terms of assembly, part of the 30S ribosomal subunit. Contacts protein S5. The interaction surface between S4 and S5 is involved in control of translational fidelity.

Functionally, one of the primary rRNA binding proteins, it binds directly to 16S rRNA where it nucleates assembly of the body of the 30S subunit. In terms of biological role, with S5 and S12 plays an important role in translational accuracy. The polypeptide is Small ribosomal subunit protein uS4 (Burkholderia lata (strain ATCC 17760 / DSM 23089 / LMG 22485 / NCIMB 9086 / R18194 / 383)).